A 226-amino-acid chain; its full sequence is Uracil-DNA glycosylase (226 aa).

The Proton acceptor role is filled by D64.

This sequence belongs to the uracil-DNA glycosylase (UDG) superfamily. UNG family.

The protein localises to the cytoplasm. It carries out the reaction Hydrolyzes single-stranded DNA or mismatched double-stranded DNA and polynucleotides, releasing free uracil.. Functionally, excises uracil residues from the DNA which can arise as a result of misincorporation of dUMP residues by DNA polymerase or due to deamination of cytosine. This chain is Uracil-DNA glycosylase, found in Vibrio campbellii (strain ATCC BAA-1116).